Reading from the N-terminus, the 438-residue chain is Aspartate--tRNA(Asp) ligase (438 aa).

Glutamate 170 contributes to the L-aspartate binding site. An aspartate region spans residues 192-195 (QLYK). Residue arginine 214 coordinates L-aspartate. Residues 214–216 (RAE), 222–224 (RHL), and glutamate 361 contribute to the ATP site. Mg(2+)-binding residues include glutamate 361 and serine 364. Residues serine 364 and arginine 368 each contribute to the L-aspartate site. 409–412 (GAER) contributes to the ATP binding site.

Belongs to the class-II aminoacyl-tRNA synthetase family. Type 2 subfamily. In terms of assembly, homodimer. Mg(2+) is required as a cofactor.

The protein resides in the cytoplasm. The enzyme catalyses tRNA(Asp) + L-aspartate + ATP = L-aspartyl-tRNA(Asp) + AMP + diphosphate. Its function is as follows. Catalyzes the attachment of L-aspartate to tRNA(Asp) in a two-step reaction: L-aspartate is first activated by ATP to form Asp-AMP and then transferred to the acceptor end of tRNA(Asp). This is Aspartate--tRNA(Asp) ligase from Pyrococcus horikoshii (strain ATCC 700860 / DSM 12428 / JCM 9974 / NBRC 100139 / OT-3).